The chain runs to 433 residues: Deoxyguanosinetriphosphate triphosphohydrolase-like protein 2 (433 aa).

The 188-residue stretch at 61 to 248 (RLTHSLEVAQ…METADDIAYT (188 aa)) folds into the HD domain.

This sequence belongs to the dGTPase family. Type 2 subfamily.

The chain is Deoxyguanosinetriphosphate triphosphohydrolase-like protein 2 from Deinococcus radiodurans (strain ATCC 13939 / DSM 20539 / JCM 16871 / CCUG 27074 / LMG 4051 / NBRC 15346 / NCIMB 9279 / VKM B-1422 / R1).